Consider the following 105-residue polypeptide: MKVHKGDTVLVISGKDKGAKGKVLVAYPDRNKVLVEGVNRIKKHTAVSANERGASSGGIVTQEAPIHVSNVMVVDSDGKPTRVGYRIDDETGKKVRIAKTNGKDI.

The protein belongs to the universal ribosomal protein uL24 family. Part of the 50S ribosomal subunit.

Functionally, one of two assembly initiator proteins, it binds directly to the 5'-end of the 23S rRNA, where it nucleates assembly of the 50S subunit. In terms of biological role, one of the proteins that surrounds the polypeptide exit tunnel on the outside of the subunit. This is Large ribosomal subunit protein uL24 from Mycolicibacterium smegmatis (strain ATCC 700084 / mc(2)155) (Mycobacterium smegmatis).